The sequence spans 296 residues: ATP-dependent ribose-1-phosphate kinase (296 aa).

The active-site Proton acceptor is the D242.

The protein belongs to the carbohydrate kinase PfkB family. Requires Mg(2+) as cofactor.

The enzyme catalyses alpha-D-ribose 1-phosphate + ATP = alpha-D-ribose 1,5-bisphosphate + ADP + H(+). Its activity is regulated as follows. Requires salt for kinase activity. 2.0 M is the optimal KCl concentration. Kinase involved in the non-carboxylating pentose bisphosphate pathway, a nucleoside degradation pathway present in some halophilic archaea. Catalyzes the ATP-dependent phosphorylation of ribose 1-phosphate (R1P) to ribose 1,5-bisphosphate (R15P). Shows weak activity towards various other phosphate acceptors, such as xylulose, 2'-deoxyguanosine and D-ribulose. ATP is the most preferred phosphate donor, followed by CTP and GTP. The chain is ATP-dependent ribose-1-phosphate kinase from Halopiger xanaduensis (strain DSM 18323 / JCM 14033 / SH-6).